The following is a 414-amino-acid chain: MDSRTTRYLKSCFQKHYKTAEIGLPDHLPNREWAFIFYDDMPEKMMHRHKSFGSPGEALDYLYGMAPAHVYNSTAYYEYPDARKMNEKNWLGAELIFDLDADHLPNAPRNYADMLELVKKETLKLMDFLLDDFGFSEQDIELVFSGGRGYHFHITSPKVLTLGSSERREIVNYLSGRDIDFKYFFREVSMDGDFGTGSKSFKGIKNLPVKCTLVGYDSGWGKRVALYLTDYMKAECGKKYKKDMFPELRRHEKVGDTTIKKLINITNSENGLKDILERGRLDFGVRNFKEIAAYFMQESMENFLNRFGASVDEPVTADIKRLIRVPGSLHGGSGMLVKKLALCELEKFNPLNDAVVFGERPVKITVSKPFSVQLKGKDLRIEEGIQEVPEYAAVYLICRGVAEYGYRRNQPDAV.

Active-site residues include Asp98, Asp100, and Asp312.

Belongs to the eukaryotic-type primase small subunit family. Heterodimer of a small subunit (PriS) and a large subunit (PriL). The cofactor is Mg(2+). Mn(2+) is required as a cofactor.

Its function is as follows. Catalytic subunit of DNA primase, an RNA polymerase that catalyzes the synthesis of short RNA molecules used as primers for DNA polymerase during DNA replication. The small subunit contains the primase catalytic core and has DNA synthesis activity on its own. Binding to the large subunit stabilizes and modulates the activity, increasing the rate of DNA synthesis while decreasing the length of the DNA fragments, and conferring RNA synthesis capability. The DNA polymerase activity may enable DNA primase to also catalyze primer extension after primer synthesis. May also play a role in DNA repair. The polypeptide is DNA primase small subunit PriS (Methanosarcina mazei (strain ATCC BAA-159 / DSM 3647 / Goe1 / Go1 / JCM 11833 / OCM 88) (Methanosarcina frisia)).